Here is a 204-residue protein sequence, read N- to C-terminus: Cytochrome c oxidase subunit 3 (204 aa).

5 helical membrane-spanning segments follow: residues 12–32, 56–76, 101–121, 133–153, and 171–191; these read YGNL…IQWW, GMML…WAYF, FQIP…VTWA, AIHS…LQMM, and FFVA…FLFM.

The protein belongs to the cytochrome c oxidase subunit 3 family. As to quaternary structure, component of the cytochrome c oxidase (complex IV, CIV), a multisubunit enzyme composed of a catalytic core of 3 subunits and several supernumerary subunits. The complex exists as a monomer or a dimer and forms supercomplexes (SCs) in the inner mitochondrial membrane with ubiquinol-cytochrome c oxidoreductase (cytochrome b-c1 complex, complex III, CIII).

The protein resides in the mitochondrion inner membrane. The catalysed reaction is 4 Fe(II)-[cytochrome c] + O2 + 8 H(+)(in) = 4 Fe(III)-[cytochrome c] + 2 H2O + 4 H(+)(out). In terms of biological role, component of the cytochrome c oxidase, the last enzyme in the mitochondrial electron transport chain which drives oxidative phosphorylation. The respiratory chain contains 3 multisubunit complexes succinate dehydrogenase (complex II, CII), ubiquinol-cytochrome c oxidoreductase (cytochrome b-c1 complex, complex III, CIII) and cytochrome c oxidase (complex IV, CIV), that cooperate to transfer electrons derived from NADH and succinate to molecular oxygen, creating an electrochemical gradient over the inner membrane that drives transmembrane transport and the ATP synthase. Cytochrome c oxidase is the component of the respiratory chain that catalyzes the reduction of oxygen to water. Electrons originating from reduced cytochrome c in the intermembrane space (IMS) are transferred via the dinuclear copper A center (CU(A)) of subunit 2 and heme A of subunit 1 to the active site in subunit 1, a binuclear center (BNC) formed by heme A3 and copper B (CU(B)). The BNC reduces molecular oxygen to 2 water molecules using 4 electrons from cytochrome c in the IMS and 4 protons from the mitochondrial matrix. The chain is Cytochrome c oxidase subunit 3 (COIII) from Enteroctopus dofleini (North Pacific giant octopus).